Reading from the N-terminus, the 239-residue chain is Orotidine 5'-phosphate decarboxylase (239 aa).

Residues aspartate 11, lysine 33, 60-69, threonine 123, arginine 185, glutamine 194, glycine 214, and arginine 215 each bind substrate; that span reads DLKCHDIPTT. Lysine 62 (proton donor) is an active-site residue.

Belongs to the OMP decarboxylase family. Type 1 subfamily. In terms of assembly, homodimer.

It catalyses the reaction orotidine 5'-phosphate + H(+) = UMP + CO2. It functions in the pathway pyrimidine metabolism; UMP biosynthesis via de novo pathway; UMP from orotate: step 2/2. Its function is as follows. Catalyzes the decarboxylation of orotidine 5'-monophosphate (OMP) to uridine 5'-monophosphate (UMP). The chain is Orotidine 5'-phosphate decarboxylase from Bacillus licheniformis (strain ATCC 14580 / DSM 13 / JCM 2505 / CCUG 7422 / NBRC 12200 / NCIMB 9375 / NCTC 10341 / NRRL NRS-1264 / Gibson 46).